Reading from the N-terminus, the 573-residue chain is Proline--tRNA ligase (573 aa).

It belongs to the class-II aminoacyl-tRNA synthetase family. ProS type 1 subfamily. In terms of assembly, homodimer.

It localises to the cytoplasm. It catalyses the reaction tRNA(Pro) + L-proline + ATP = L-prolyl-tRNA(Pro) + AMP + diphosphate. Catalyzes the attachment of proline to tRNA(Pro) in a two-step reaction: proline is first activated by ATP to form Pro-AMP and then transferred to the acceptor end of tRNA(Pro). As ProRS can inadvertently accommodate and process non-cognate amino acids such as alanine and cysteine, to avoid such errors it has two additional distinct editing activities against alanine. One activity is designated as 'pretransfer' editing and involves the tRNA(Pro)-independent hydrolysis of activated Ala-AMP. The other activity is designated 'posttransfer' editing and involves deacylation of mischarged Ala-tRNA(Pro). The misacylated Cys-tRNA(Pro) is not edited by ProRS. This is Proline--tRNA ligase from Limosilactobacillus fermentum (strain NBRC 3956 / LMG 18251) (Lactobacillus fermentum).